Reading from the N-terminus, the 355-residue chain is Plasmodial-specific protein LAV1-2 (355 aa).

EF-hand domains lie at 151 to 186 and 217 to 252; these read EDTNILRQLFLSSAVSGSGKFSFQDLKQVLAKYADT and NDLAALVADFRKIDTNSNGTLSRKEFREHFVRLGFD. Aspartate 230, asparagine 232, asparagine 234, threonine 236, glutamate 241, aspartate 265, aspartate 267, serine 269, aspartate 271, glutamate 276, aspartate 295, aspartate 297, serine 299, glutamine 301, glutamate 306, aspartate 332, aspartate 334, serine 336, serine 338, and glutamate 343 together coordinate Ca(2+). 2 consecutive EF-hand domains span residues 282–317 and 319–354; these read LCLLVLRILYAFADFDKSGQLSKEEVQKVLEDAHIP and SARKKFEHQFSVVDVDDSKSLSYQEFVMLVLLMFHD.

The protein is Plasmodial-specific protein LAV1-2 of Physarum polycephalum (Slime mold).